A 253-amino-acid chain; its full sequence is Imidazole glycerol phosphate synthase subunit HisF (253 aa).

Active-site residues include aspartate 12 and aspartate 131.

It belongs to the HisA/HisF family. In terms of assembly, heterodimer of HisH and HisF.

It localises to the cytoplasm. It catalyses the reaction 5-[(5-phospho-1-deoxy-D-ribulos-1-ylimino)methylamino]-1-(5-phospho-beta-D-ribosyl)imidazole-4-carboxamide + L-glutamine = D-erythro-1-(imidazol-4-yl)glycerol 3-phosphate + 5-amino-1-(5-phospho-beta-D-ribosyl)imidazole-4-carboxamide + L-glutamate + H(+). It functions in the pathway amino-acid biosynthesis; L-histidine biosynthesis; L-histidine from 5-phospho-alpha-D-ribose 1-diphosphate: step 5/9. Its function is as follows. IGPS catalyzes the conversion of PRFAR and glutamine to IGP, AICAR and glutamate. The HisF subunit catalyzes the cyclization activity that produces IGP and AICAR from PRFAR using the ammonia provided by the HisH subunit. In Corynebacterium urealyticum (strain ATCC 43042 / DSM 7109), this protein is Imidazole glycerol phosphate synthase subunit HisF.